A 437-amino-acid polypeptide reads, in one-letter code: Histidinol dehydrogenase (437 aa).

Positions 133, 191, and 214 each coordinate NAD(+). 3 residues coordinate substrate: Ser240, Gln262, and His265. Residues Gln262 and His265 each coordinate Zn(2+). Catalysis depends on proton acceptor residues Glu329 and His330. His330, Asp363, Glu417, and His422 together coordinate substrate. Asp363 is a Zn(2+) binding site. Zn(2+) is bound at residue His422.

Belongs to the histidinol dehydrogenase family. As to quaternary structure, homodimer. It depends on Zn(2+) as a cofactor.

The catalysed reaction is L-histidinol + 2 NAD(+) + H2O = L-histidine + 2 NADH + 3 H(+). The protein operates within amino-acid biosynthesis; L-histidine biosynthesis; L-histidine from 5-phospho-alpha-D-ribose 1-diphosphate: step 9/9. Its function is as follows. Catalyzes the sequential NAD-dependent oxidations of L-histidinol to L-histidinaldehyde and then to L-histidine. This is Histidinol dehydrogenase from Blochmanniella floridana.